Consider the following 194-residue polypeptide: Probable chorismate pyruvate-lyase (194 aa).

Residues Arg-77, Leu-115, and Glu-176 each contribute to the substrate site.

This sequence belongs to the UbiC family.

It localises to the cytoplasm. It catalyses the reaction chorismate = 4-hydroxybenzoate + pyruvate. It functions in the pathway cofactor biosynthesis; ubiquinone biosynthesis. In terms of biological role, removes the pyruvyl group from chorismate, with concomitant aromatization of the ring, to provide 4-hydroxybenzoate (4HB) for the ubiquinone pathway. The sequence is that of Probable chorismate pyruvate-lyase from Cupriavidus pinatubonensis (strain JMP 134 / LMG 1197) (Cupriavidus necator (strain JMP 134)).